The primary structure comprises 445 residues: Exodeoxyribonuclease 7 large subunit (445 aa).

Belongs to the XseA family. Heterooligomer composed of large and small subunits.

The protein resides in the cytoplasm. The enzyme catalyses Exonucleolytic cleavage in either 5'- to 3'- or 3'- to 5'-direction to yield nucleoside 5'-phosphates.. Bidirectionally degrades single-stranded DNA into large acid-insoluble oligonucleotides, which are then degraded further into small acid-soluble oligonucleotides. This is Exodeoxyribonuclease 7 large subunit from Staphylococcus aureus (strain JH1).